A 316-amino-acid polypeptide reads, in one-letter code: N-acetyl-gamma-glutamyl-phosphate reductase (316 aa).

Residue C136 is part of the active site.

This sequence belongs to the NAGSA dehydrogenase family. Type 1 subfamily.

It is found in the cytoplasm. The enzyme catalyses N-acetyl-L-glutamate 5-semialdehyde + phosphate + NADP(+) = N-acetyl-L-glutamyl 5-phosphate + NADPH + H(+). It participates in amino-acid biosynthesis; L-arginine biosynthesis; N(2)-acetyl-L-ornithine from L-glutamate: step 3/4. Functionally, catalyzes the NADPH-dependent reduction of N-acetyl-5-glutamyl phosphate to yield N-acetyl-L-glutamate 5-semialdehyde. This is N-acetyl-gamma-glutamyl-phosphate reductase from Xanthomonas axonopodis pv. citri (strain 306).